A 484-amino-acid chain; its full sequence is Aspartyl/glutamyl-tRNA(Asn/Gln) amidotransferase subunit B (484 aa).

The protein belongs to the GatB/GatE family. GatB subfamily. As to quaternary structure, heterotrimer of A, B and C subunits.

It carries out the reaction L-glutamyl-tRNA(Gln) + L-glutamine + ATP + H2O = L-glutaminyl-tRNA(Gln) + L-glutamate + ADP + phosphate + H(+). The enzyme catalyses L-aspartyl-tRNA(Asn) + L-glutamine + ATP + H2O = L-asparaginyl-tRNA(Asn) + L-glutamate + ADP + phosphate + 2 H(+). Its function is as follows. Allows the formation of correctly charged Asn-tRNA(Asn) or Gln-tRNA(Gln) through the transamidation of misacylated Asp-tRNA(Asn) or Glu-tRNA(Gln) in organisms which lack either or both of asparaginyl-tRNA or glutaminyl-tRNA synthetases. The reaction takes place in the presence of glutamine and ATP through an activated phospho-Asp-tRNA(Asn) or phospho-Glu-tRNA(Gln). The protein is Aspartyl/glutamyl-tRNA(Asn/Gln) amidotransferase subunit B of Bordetella parapertussis (strain 12822 / ATCC BAA-587 / NCTC 13253).